An 834-amino-acid polypeptide reads, in one-letter code: Structure-specific endonuclease subunit SLX4 (834 aa).

Disordered stretches follow at residues 80–105 (RVPR…KTTT), 272–307 (TVPA…QKGK), 332–372 (QNVA…GRPV), 401–421 (GYPE…SNSA), 603–649 (ESKP…AKAL), and 720–740 (ATPN…SIEP). The span at 279–295 (PTESSTTEDVQGSSSKQ) shows a compositional bias: polar residues. Residues 296 to 305 (QRVKAKKPQK) show a composition bias toward basic residues. Composition is skewed to polar residues over residues 345-366 (SNRP…TLKN) and 412-421 (DTQNSPSNSA). Residues 611–630 (DDARKNGFRKENHSDVRVRP) are compositionally biased toward basic and acidic residues. Over residues 729-740 (QGSSSASFSIEP) the composition is skewed to low complexity.

The protein belongs to the SLX4 family. In terms of assembly, forms a heterodimer with SLX1. Post-translationally, phosphorylated in response to DNA damage.

The protein localises to the nucleus. Regulatory subunit of the SLX1-SLX4 structure-specific endonuclease that resolves DNA secondary structures generated during DNA repair and recombination. Has endonuclease activity towards branched DNA substrates, introducing single-strand cuts in duplex DNA close to junctions with ss-DNA. This is Structure-specific endonuclease subunit SLX4 from Ajellomyces capsulatus (strain NAm1 / WU24) (Darling's disease fungus).